Consider the following 257-residue polypeptide: Transmembrane protein C257L (257 aa).

A run of 2 helical transmembrane segments spans residues 123–143 (LELL…FTAL) and 163–183 (IMIF…YVLV).

This sequence belongs to the asfivirus C257R family.

Its subcellular location is the host membrane. It localises to the virion. This African swine fever virus (isolate Pig/Kenya/KEN-50/1950) (ASFV) protein is Transmembrane protein C257L.